The primary structure comprises 212 residues: Ropporin-1 (212 aa).

The RIIa domain occupies 12–49 (PELPKMLKEFAKAAIRAQPQDLIQWGADYFEALSRGET). A Phosphoserine modification is found at S56. The tract at residues 209-212 (VWLE) is interaction with RHPN1.

Belongs to the ropporin family. As to quaternary structure, homodimer. Interacts with AKAP3. May interact with SPA17. Interacts with RHPN1. Interacts with FSCB; the interaction increases upon spermatozoa capacitation conditions. Interacts with CFAP61. In terms of processing, sumoylated, sumoylation decreases upon spermatozoa capacitation conditions.

It is found in the cell projection. It localises to the cilium. The protein resides in the flagellum. Functionally, important for male fertility. With ROPN1L, involved in fibrous sheath integrity and sperm motility, plays a role in PKA-dependent signaling processes required for spermatozoa capacitation. The chain is Ropporin-1 (ROPN1) from Macaca fascicularis (Crab-eating macaque).